The chain runs to 300 residues: Free fatty acid receptor 1 (300 aa).

At 1-8 the chain is on the extracellular side; that stretch reads MDLPPQLS. Residues 9–31 traverse the membrane as a helical segment; it reads FALYVAAFALGFPLNVLAIRGAR. At 32–41 the chain is on the cytoplasmic side; sequence AHARRRLTPS. A helical membrane pass occupies residues 42 to 64; that stretch reads LVYALNLGCSDLLLTVSLPLKAV. Residues 65 to 79 lie on the Extracellular side of the membrane; it reads EALASGAWPLPASLC. Cysteines 79 and 170 form a disulfide. Residues 80–101 form a helical membrane-spanning segment; the sequence is PVFGVAHFAPLYAGGGFLAALS. Residues 102–121 lie on the Cytoplasmic side of the membrane; it reads AGRYLGAAFPLGYQAFRRPC. The helical transmembrane segment at 122–142 threads the bilayer; sequence YSWGVCAAIWALVLCHLGLVF. Over 143–178 the chain is Extracellular; the sequence is VLEAPGGWLDHSNTSLGINTPVNGSPVCLEAWDPAS. N-linked (GlcNAc...) asparagine glycosylation is present at Asn155. A helical membrane pass occupies residues 179–200; the sequence is AGPARFSLSLLLFFLPLAITAF. The Cytoplasmic portion of the chain corresponds to 201–223; it reads CYVGCLRALAHSGLTHRRKLRAA. The chain crosses the membrane as a helical span at residues 224 to 248; the sequence is WVAGGALLTLLLCVGPYNASNVASF. Residues 249–256 lie on the Extracellular side of the membrane; sequence LNPNLGGS. Residues 257–279 form a helical membrane-spanning segment; sequence WRKLGLITGAWSVVLNPLVTGYL. At 280 to 300 the chain is on the cytoplasmic side; the sequence is GRGPGLKTVCAARTQGSTSQK.

The protein belongs to the G-protein coupled receptor 1 family.

Its subcellular location is the cell membrane. In terms of biological role, G-protein coupled receptor for medium and long chain saturated and unsaturated fatty acids that plays an important role in glucose homeostasis. Fatty acid binding increases glucose-stimulated insulin secretion, and may also enhance the secretion of glucagon-like peptide 1 (GLP-1). May also play a role in bone homeostasis; receptor signaling activates pathways that inhibit osteoclast differentiation. Ligand binding leads to a conformation change that triggers signaling via G-proteins that activate phospholipase C, leading to an increase of the intracellular calcium concentration. Seems to act through a G(q) and G(i)-mediated pathway. Mediates the anti-inflammatory effects of omega-3 polyunsaturated fatty acids (PUFAs) via inhibition of NLRP3 inflammasome activation. The sequence is that of Free fatty acid receptor 1 (FFAR1) from Macaca fascicularis (Crab-eating macaque).